The chain runs to 428 residues: Arginine biosynthesis bifunctional protein ArgJ, mitochondrial (428 aa).

Substrate-binding residues include Thr-171, Lys-197, Thr-208, Glu-294, Asn-423, and Ser-428. The Nucleophile role is filled by Thr-208.

Belongs to the ArgJ family. Heterodimer of an alpha and a beta chain. The alpha and beta chains are autoproteolytically processed from a single precursor protein within the mitochondrion.

It localises to the mitochondrion matrix. The catalysed reaction is N(2)-acetyl-L-ornithine + L-glutamate = N-acetyl-L-glutamate + L-ornithine. It catalyses the reaction L-glutamate + acetyl-CoA = N-acetyl-L-glutamate + CoA + H(+). The protein operates within amino-acid biosynthesis; L-arginine biosynthesis; L-ornithine and N-acetyl-L-glutamate from L-glutamate and N(2)-acetyl-L-ornithine (cyclic): step 1/1. It participates in amino-acid biosynthesis; L-arginine biosynthesis; N(2)-acetyl-L-ornithine from L-glutamate: step 1/4. In terms of biological role, catalyzes two activities which are involved in the cyclic version of arginine biosynthesis: the synthesis of acetylglutamate from glutamate and acetyl-CoA, and of ornithine by transacetylation between acetylornithine and glutamate. This Komagataella phaffii (strain GS115 / ATCC 20864) (Yeast) protein is Arginine biosynthesis bifunctional protein ArgJ, mitochondrial.